Consider the following 601-residue polypeptide: Nuclear envelope protein ndc1 (601 aa).

The Cytoplasmic portion of the chain corresponds to 1 to 34; that stretch reads MVMLRTSFPSGSRTKAVRYHTLLRPILQQRFLRA. Residues 35 to 55 traverse the membrane as a helical segment; that stretch reads CFALLCLCCITSYWFSSGPFI. Residues 56–58 lie on the Perinuclear space side of the membrane; that stretch reads SLS. A helical transmembrane segment spans residues 59–79; the sequence is FWFLSLVRGFVCFFFMFPYFV. Residues 80 to 106 are Cytoplasmic-facing; sequence MLKSRMSTQKVTKQSLGAQLFYDFSPK. The chain crosses the membrane as a helical span at residues 107 to 127; the sequence is SFFLVYLTFAVSVSCLCLFYI. The Perinuclear space portion of the chain corresponds to 128-153; that stretch reads KGHASSIRLQWIASPNAYELPSLNER. Residues 154–174 form a helical membrane-spanning segment; it reads FVYMTYFSHILILALTVEHLY. The Cytoplasmic segment spans residues 175-182; that stretch reads LQRDSPSR. The chain crosses the membrane as a helical span at residues 183 to 203; that stretch reads PVINVSFFNYIFQNLGWLIRF. Topologically, residues 204 to 256 are perinuclear space; the sequence is SFRKSIICCLFTPFSYAILRSYIWRFAALLTSCCRRIAYTKTPPKWPLSLRLL. The helical transmembrane segment at 257 to 277 threads the bilayer; that stretch reads LHSFWMAFIVCLTFQIALLIF. The Cytoplasmic segment spans residues 278–601; the sequence is RVFLYSGPMI…VLFREYKSNS (324 aa).

This sequence belongs to the NDC1 family. Component of the nuclear pore complex (NPC). NPC constitutes the exclusive means of nucleocytoplasmic transport. NPCs allow the passive diffusion of ions and small molecules and the active, nuclear transport receptor-mediated bidirectional transport of macromolecules such as proteins, RNAs, ribonucleoparticles (RNPs), and ribosomal subunits across the nuclear envelope. Due to its 8-fold rotational symmetry, all subunits are present with 8 copies or multiples thereof.

The protein localises to the nucleus. It is found in the nuclear pore complex. It localises to the nucleus membrane. Its subcellular location is the cytoplasm. The protein resides in the cytoskeleton. The protein localises to the microtubule organizing center. It is found in the spindle pole body. Component of the nuclear pore complex (NPC) and the spindle pole body (SPB), which plays a key role in de novo assembly and insertion of both structures in the nuclear envelope. Involved in the formation of the bipolar mitotic spindle. Anchors the spindle pole body in the nuclear envelope. This is Nuclear envelope protein ndc1 (cut11) from Schizosaccharomyces pombe (strain 972 / ATCC 24843) (Fission yeast).